The sequence spans 306 residues: GTPase IMAP family member 1 (306 aa).

Positions methionine 1 to glutamine 21 are disordered. The Cytoplasmic segment spans residues methionine 1–arginine 272. Residues glutamate 25–glutamine 229 enclose the AIG1-type G domain. The segment at glycine 34 to serine 41 is G1. GTP is bound by residues glycine 34–alanine 42 and serine 55. The tract at residues serine 61 to alanine 65 is G2. Residues aspartate 82–aspartate 85 form a G3 region. A G4 region spans residues threonine 152 to glutamate 155. Residues arginine 153–glutamate 155 and asparagine 190 contribute to the GTP site. Residues aspartate 189–arginine 191 are G5. A helical; Anchor for type IV membrane protein transmembrane segment spans residues serine 273–leucine 292. Residues histidine 293–aspartate 306 are Lumenal-facing.

This sequence belongs to the TRAFAC class TrmE-Era-EngA-EngB-Septin-like GTPase superfamily. AIG1/Toc34/Toc159-like paraseptin GTPase family. IAN subfamily. Predominantly expressed in the spleen and to a lesser extent in the lymph nodes. Detected in T-cells.

Its subcellular location is the endoplasmic reticulum membrane. The protein localises to the golgi apparatus membrane. Functionally, may regulate lymphocyte survival. Required for normal levels of mature T-lymphocytes and mature B-cells. This is GTPase IMAP family member 1 (GIMAP1) from Homo sapiens (Human).